The following is an 878-amino-acid chain: Protein translocase subunit SecA (878 aa).

ATP is bound by residues Gln-81, 99–103 (GEGKT), and Asp-489.

The protein belongs to the SecA family.

It localises to the plastid. The protein localises to the chloroplast stroma. It is found in the chloroplast thylakoid membrane. The enzyme catalyses ATP + H2O + cellular proteinSide 1 = ADP + phosphate + cellular proteinSide 2.. Functionally, has a central role in coupling the hydrolysis of ATP to the transfer of proteins across the thylakoid membrane. In Thalassiosira pseudonana (Marine diatom), this protein is Protein translocase subunit SecA.